Consider the following 254-residue polypeptide: Small ribosomal subunit protein uS2 (254 aa).

Residues 225-254 (ALSERKREKDDAKLKEDEESKKASDKAEIQ) form a disordered region. Residues 226-254 (LSERKREKDDAKLKEDEESKKASDKAEIQ) are compositionally biased toward basic and acidic residues.

The protein belongs to the universal ribosomal protein uS2 family.

This is Small ribosomal subunit protein uS2 from Cytophaga hutchinsonii (strain ATCC 33406 / DSM 1761 / CIP 103989 / NBRC 15051 / NCIMB 9469 / D465).